The primary structure comprises 50 residues: Mating-type pheromone BAP1(1) (50 aa).

The segment at 1 to 32 is disordered; it reads MDGEGHDINIWGARMSPSPAAAPVSATRGAPW. Over residues 16–26 the composition is skewed to low complexity; it reads SPSPAAAPVSA. Cys-47 is modified (cysteine methyl ester). Cys-47 carries the S-farnesyl cysteine lipid modification. The propeptide at 48 to 50 is removed in mature form; the sequence is VCH.

It localises to the cell membrane. Activates B-regulated development. The sequence is that of Mating-type pheromone BAP1(1) (BAP1(1)) from Schizophyllum commune (Split gill fungus).